Reading from the N-terminus, the 110-residue chain is Large ribosomal subunit protein uL22 (110 aa).

This sequence belongs to the universal ribosomal protein uL22 family. In terms of assembly, part of the 50S ribosomal subunit.

This protein binds specifically to 23S rRNA; its binding is stimulated by other ribosomal proteins, e.g. L4, L17, and L20. It is important during the early stages of 50S assembly. It makes multiple contacts with different domains of the 23S rRNA in the assembled 50S subunit and ribosome. Functionally, the globular domain of the protein is located near the polypeptide exit tunnel on the outside of the subunit, while an extended beta-hairpin is found that lines the wall of the exit tunnel in the center of the 70S ribosome. The sequence is that of Large ribosomal subunit protein uL22 from Acinetobacter baumannii (strain ACICU).